The following is a 158-amino-acid chain: UPF0260 protein RHECIAT_CH0001358 (158 aa).

It belongs to the UPF0260 family.

In Rhizobium etli (strain CIAT 652), this protein is UPF0260 protein RHECIAT_CH0001358.